Here is a 487-residue protein sequence, read N- to C-terminus: Signal recognition particle subunit SRP54 (487 aa).

Residues 1 to 295 form a G-domain region; the sequence is MVLSQLGSSL…DAESFVRKLL (295 aa). GTP is bound by residues 108-115, 190-194, and 248-251; these read GLQGAGKT, DTSGR, and TKLD. The tract at residues 296-487 is M-domain; the sequence is GMGDLKGIAK…LGGTGKKGKK (192 aa).

The protein belongs to the GTP-binding SRP family. SRP54 subfamily. In terms of assembly, component of a signal recognition particle (SRP) complex that consists of a 7SL RNA molecule of 300 nucleotides and six protein subunits: SRP72, SRP68, SRP54, SRP19, SRP14 and SRP9.

It is found in the cytoplasm. It localises to the endoplasmic reticulum. It catalyses the reaction GTP + H2O = GDP + phosphate + H(+). Its function is as follows. Component of the signal recognition particle (SRP) complex, a ribonucleoprotein complex that mediates the cotranslational targeting of secretory and membrane proteins to the endoplasmic reticulum (ER). As part of the SRP complex, associates with the SRP receptor (SR) component SRPRA to target secretory proteins to the endoplasmic reticulum membrane. Binds to the signal sequence of presecretory proteins when they emerge from the ribosomes. Displays basal GTPase activity, and stimulates reciprocal GTPase activation of the SR subunit SRPRA. Forms a guanosine 5'-triphosphate (GTP)-dependent complex with the SR subunit SRPRA. SR compaction and GTPase mediated rearrangement of SR drive SRP-mediated cotranslational protein translocation into the ER. Requires the presence of SRP9/SRP14 and/or SRP19 to stably interact with RNA. The polypeptide is Signal recognition particle subunit SRP54 (Entamoeba histolytica (strain ATCC 30459 / HM-1:IMSS / ABRM)).